A 171-amino-acid chain; its full sequence is S-ribosylhomocysteine lyase (171 aa).

Fe cation contacts are provided by His-54, His-58, and Cys-128.

Belongs to the LuxS family. In terms of assembly, homodimer. It depends on Fe cation as a cofactor.

It carries out the reaction S-(5-deoxy-D-ribos-5-yl)-L-homocysteine = (S)-4,5-dihydroxypentane-2,3-dione + L-homocysteine. Its function is as follows. Involved in the synthesis of autoinducer 2 (AI-2) which is secreted by bacteria and is used to communicate both the cell density and the metabolic potential of the environment. The regulation of gene expression in response to changes in cell density is called quorum sensing. Catalyzes the transformation of S-ribosylhomocysteine (RHC) to homocysteine (HC) and 4,5-dihydroxy-2,3-pentadione (DPD). The protein is S-ribosylhomocysteine lyase of Salmonella agona (strain SL483).